A 234-amino-acid polypeptide reads, in one-letter code: Synaptogyrin-1 (234 aa).

The residue at position 1 (Met-1) is an N-acetylmethionine. At 1 to 23 (MEGGAYGAGKAGGAFDPYTLVRQ) the chain is on the cytoplasmic side. The region spanning 20–173 (LVRQPHTILR…QAVLAFQRYQ (154 aa)) is the MARVEL domain. The helical transmembrane segment at 24–44 (PHTILRVVSWVFSIVVFGSIV) threads the bilayer. The Lumenal portion of the chain corresponds to 45–71 (NEGYLNNPEEEEEFCIYNRNPNACSYG). The chain crosses the membrane as a helical span at residues 72 to 92 (VTVGVLAFLTCLLYLALDVYF). Residues 93–103 (PQISSVKDRKK) lie on the Cytoplasmic side of the membrane. The chain crosses the membrane as a helical span at residues 104–124 (AVLSDIGVSAFWAFFWFVGFC). The Lumenal portion of the chain corresponds to 125–148 (FLANQWQVSKPKDNPLNEGTDAAR). A helical membrane pass occupies residues 149 to 169 (AAIAFSFFSIFTWAGQAVLAF). The Cytoplasmic portion of the chain corresponds to 170-234 (QRYQIGADSA…EPQGYQSQGY (65 aa)). The segment at 201–234 (EPSAGSDPAGMGGTYQHPANAFDAEPQGYQSQGY) is disordered.

The protein belongs to the synaptogyrin family.

The protein localises to the cytoplasmic vesicle. It is found in the secretory vesicle. Its subcellular location is the synaptic vesicle membrane. It localises to the melanosome. In terms of biological role, may play a role in regulated exocytosis. Modulates the localization of synaptophysin/SYP into synaptic-like microvesicles and may therefore play a role in synaptic-like microvesicle formation and/or maturation. Involved in the regulation of short-term and long-term synaptic plasticity. This chain is Synaptogyrin-1, found in Mus musculus (Mouse).